The chain runs to 874 residues: Alanine--tRNA ligase (874 aa).

The Zn(2+) site is built by His-562, His-566, Cys-664, and His-668.

It belongs to the class-II aminoacyl-tRNA synthetase family. Zn(2+) serves as cofactor.

The protein localises to the cytoplasm. The enzyme catalyses tRNA(Ala) + L-alanine + ATP = L-alanyl-tRNA(Ala) + AMP + diphosphate. Catalyzes the attachment of alanine to tRNA(Ala) in a two-step reaction: alanine is first activated by ATP to form Ala-AMP and then transferred to the acceptor end of tRNA(Ala). Also edits incorrectly charged Ser-tRNA(Ala) and Gly-tRNA(Ala) via its editing domain. This chain is Alanine--tRNA ligase, found in Shewanella sediminis (strain HAW-EB3).